The chain runs to 894 residues: Alpha-actinin-2 (894 aa).

The segment at 1–254 (MNQIEPGVQY…IMTYVSCFYH (254 aa)) is actin-binding. 2 Calponin-homology (CH) domains span residues 38–142 (KQQR…LRFA) and 151–257 (TSAK…HAFA). At Thr237 the chain carries Phosphothreonine. 4 Spectrin repeats span residues 281–391 (RLME…WLLN), 401–506 (HLAE…ALER), 516–627 (QLHL…SLQE), and 637–740 (RLRR…EVET). 2 EF-hand domains span residues 753-788 (EQMN…MGYD) and 789-824 (LGEA…ETAD). 6 residues coordinate Ca(2+): Asp766, Asn770, Asp777, Asp802, Asn804, and Thr808.

It belongs to the alpha-actinin family. In terms of assembly, homodimer; antiparallel. Also forms heterodimers with ACTN3. Interacts with ADAM12, MYOZ1, MYOZ2 and MYOZ3. Interacts via its C-terminal region with the LDB3 PDZ domain. Interacts with XIRP2. Interacts with DST (via N-terminus). Interacts with PARVB. Interacts with SYNPO2. In terms of processing, ubiquitinated by FBXL22, leading to proteasomal degradation.

It localises to the cytoplasm. It is found in the myofibril. The protein localises to the sarcomere. The protein resides in the z line. Functionally, F-actin cross-linking protein which is thought to anchor actin to a variety of intracellular structures. This is a bundling protein. This chain is Alpha-actinin-2 (ACTN2), found in Bos taurus (Bovine).